We begin with the raw amino-acid sequence, 320 residues long: Ferrochelatase (320 aa).

The Fe cation site is built by His194 and Glu275.

Belongs to the ferrochelatase family. Monomer.

It localises to the cytoplasm. The enzyme catalyses heme b + 2 H(+) = protoporphyrin IX + Fe(2+). It participates in porphyrin-containing compound metabolism; protoheme biosynthesis; protoheme from protoporphyrin-IX: step 1/1. Catalyzes the ferrous insertion into protoporphyrin IX. This chain is Ferrochelatase, found in Salmonella schwarzengrund (strain CVM19633).